A 285-amino-acid chain; its full sequence is RNase adapter protein RapZ (285 aa).

An ATP-binding site is contributed by 8-15 (GRSGSGKS). 56 to 59 (DVRN) lines the GTP pocket. The segment at 266–285 (RSRGKNVQSRHRTLEKRKPS) is RNA-binding.

It belongs to the RapZ-like family. RapZ subfamily. As to quaternary structure, homotrimer.

Its function is as follows. Modulates the synthesis of GlmS, by affecting the processing and stability of the regulatory small RNA GlmZ. When glucosamine-6-phosphate (GlcN6P) concentrations are high in the cell, RapZ binds GlmZ and targets it to cleavage by RNase E. Consequently, GlmZ is inactivated and unable to activate GlmS synthesis. Under low GlcN6P concentrations, RapZ is sequestered and inactivated by an other regulatory small RNA, GlmY, preventing GlmZ degradation and leading to synthesis of GlmS. This Pectobacterium atrosepticum (strain SCRI 1043 / ATCC BAA-672) (Erwinia carotovora subsp. atroseptica) protein is RNase adapter protein RapZ.